A 372-amino-acid chain; its full sequence is G patch domain and ankyrin repeat-containing protein 1 (372 aa).

The tract at residues 74-110 (DSSSSKPQRAEPMRERKKKRRRVTREPAAAGVPRQGR) is disordered. 2 ANK repeats span residues 124-155 (LAAQ…ARDA) and 156-186 (FWWT…WVGV). Disordered stretches follow at residues 211-233 (RESH…SSQF) and 251-271 (AHLL…GVPT). Residues 220 to 233 (PENQNRSTPSSSQF) show a composition bias toward polar residues. One can recognise a G-patch domain in the interval 271-317 (TSSPGFRLLLRGGWEPGMGLGPRGEGRANPIPTILKRDQEGLGYRSP). Lys-306 participates in a covalent cross-link: Glycyl lysine isopeptide (Lys-Gly) (interchain with G-Cter in SUMO2). 2 stretches are compositionally biased toward basic and acidic residues: residues 330 to 340 (TRAVSGRERVP) and 348 to 357 (RENRRQEEKG). The disordered stretch occupies residues 330–357 (TRAVSGRERVPRVATLSQRENRRQEEKG).

The chain is G patch domain and ankyrin repeat-containing protein 1 (Gpank1) from Mus musculus (Mouse).